Reading from the N-terminus, the 841-residue chain is Toll-like receptor 4 (841 aa).

The signal sequence occupies residues 1 to 23 (MMARVRLAAALIPATAILSCLRT). The Extracellular segment spans residues 24–632 (ESWDPCVQVV…FRNATCQMSK (609 aa)). Cysteines 29 and 40 form a disulfide. Residues Asn35 and Asn73 are each glycosylated (N-linked (GlcNAc...) asparagine). LRR repeat units follow at residues 55–76 (STKM…NFSS), 79–100 (ELQV…TFQG), 103–124 (HLST…AFSG), 127–148 (SLQK…PIGH), 151–172 (TLKE…EYFS), 176–197 (NLEH…DVKV), and 205–225 (NLSL…TFKE). Residues Asn205, Asn238, Asn282, and Asn309 are each glycosylated (N-linked (GlcNAc...) asparagine). An intrachain disulfide couples Cys281 to Cys306. 9 LRR repeats span residues 352 to 373 (SLKK…FQLP), 374 to 395 (SLQY…SHAD), 400 to 422 (NLKH…MGLE), 423 to 444 (KLEH…SVFL), 448 to 469 (NLRY…IFTG), 472 to 495 (SLKT…FTEL), 497 to 518 (NLTV…AFHS), 521 to 542 (SLQV…LYEP), and 545 to 568 (LLRI…QNLP). Cys390 and Cys391 are joined by a disulfide. 2 N-linked (GlcNAc...) asparagine glycosylation sites follow: Asn497 and Asn526. Asn570 and Asn575 each carry an N-linked (GlcNAc...) asparagine glycan. The LRRCT domain occupies 579-630 (NAFACVCEHQRFLQWVKDQRQLLVGAEQMMCAEPLDMKDMPVLSFRNATCQM). 2 cysteine pairs are disulfide-bonded: Cys583/Cys609 and Cys585/Cys628. The N-linked (GlcNAc...) asparagine glycan is linked to Asn625. A helical transmembrane segment spans residues 633–653 (MIISVSVVTVLLVSVVGVLVY). Residues 654-841 (KFYFHLMLLA…TNPQEATTST (188 aa)) lie on the Cytoplasmic side of the membrane. One can recognise a TIR domain in the interval 673–816 (STYGAFVIYS…VFWRRLRKAL (144 aa)). The disordered stretch occupies residues 820–841 (KPQSPEGTADAETNPQEATTST). Polar residues predominate over residues 830–841 (AETNPQEATTST).

The protein belongs to the Toll-like receptor family. In terms of assembly, belongs to the lipopolysaccharide (LPS) receptor, a multi-protein complex containing at least CD14, LY96 and TLR4. Binding to bacterial LPS leads to homodimerization. Interacts with LY96 via the extracellular domain. Interacts with MYD88 and TIRAP via their respective TIR domains. Interacts with TICAM2. Interacts with NOX4. Interacts with CNPY3 and HSP90B1; this interaction is required for proper folding in the endoplasmic reticulum. Interacts with MAP3K21; this interaction leads to negative regulation of TLR4 signaling. Interacts with CD36, following CD36 stimulation by oxLDL or amyloid-beta 42, and forms a heterodimer with TLR6. The trimeric complex is internalized and triggers inflammatory response. LYN kinase activity facilitates TLR4-TLR6 heterodimerization and signal initiation. Interacts with TICAM1 in response to LPS in a WDFY1-dependent manner. Interacts with WDFY1 in response to LPS. Interacts with SMPDL3B. Interacts with CEACAM1; upon lipopolysaccharide stimulation, forms a complex including TLR4 and the phosphorylated form of SYK and CEACAM1, which in turn, recruits PTPN6 that dephosphorylates SYK, reducing the production of reactive oxygen species (ROS) and lysosome disruption, which in turn, reduces the activity of the inflammasome. Interacts with RFTN1; the interaction occurs in response to lipopolysaccharide stimulation. Interacts with SCIMP; the interaction occurs in response to lipopolysaccharide stimulation and is enhanced by phosphorylation of SCIMP by LYN. This interaction facilitates the phosphorylation of TLR4 by LYN which elicits a selective cytokine response in macrophages. Interacts with TRAF3IP3. Interacts with TREM1; this interaction enhances TLR4-mediated inflammatory response. Interacts with ZG16B/PAUF. Interacts with CD82; this interaction inhibits TLR4-mediated signaling pathway. Phosphorylated on tyrosine residues by LYN after binding lipopolysaccharide. Post-translationally, ubiquitinated by RNF128 via 'Lys-28'-linked polyubiquitin chains, leading to proteasomal degradation.

Its subcellular location is the cell membrane. The protein resides in the early endosome. It localises to the cell projection. The protein localises to the ruffle. Its function is as follows. Transmembrane receptor that functions as a pattern recognition receptor recognizing pathogen- and damage-associated molecular patterns (PAMPs and DAMPs) to induce innate immune responses via downstream signaling pathways. At the plasma membrane, cooperates with LY96 to mediate the innate immune response to bacterial lipopolysaccharide (LPS). Also involved in LPS-independent inflammatory responses triggered by free fatty acids, such as palmitate, and Ni(2+). Mechanistically, acts via MYD88, TIRAP and TRAF6, leading to NF-kappa-B activation, cytokine secretion and the inflammatory response. Alternatively, CD14-mediated TLR4 internalization via endocytosis is associated with the initiation of a MYD88-independent signaling via the TICAM1-TBK1-IRF3 axis leading to type I interferon production. In addition to the secretion of proinflammatory cytokines, initiates the activation of NLRP3 inflammasome and formation of a positive feedback loop between autophagy and NF-kappa-B signaling cascade. In complex with TLR6, promotes inflammation in monocytes/macrophages by associating with TLR6 and the receptor CD86. Upon ligand binding, such as oxLDL or amyloid-beta 42, the TLR4:TLR6 complex is internalized and triggers inflammatory response, leading to NF-kappa-B-dependent production of CXCL1, CXCL2 and CCL9 cytokines, via MYD88 signaling pathway, and CCL5 cytokine, via TICAM1 signaling pathway. In myeloid dendritic cells, vesicular stomatitis virus glycoprotein G but not LPS promotes the activation of IRF7, leading to type I IFN production in a CD14-dependent manner. This chain is Toll-like receptor 4 (TLR4), found in Boselaphus tragocamelus (Nilgai).